Reading from the N-terminus, the 584-residue chain is ATP synthase subunit alpha, mitochondrial (584 aa).

A mitochondrion-targeting transit peptide spans 1–24; sequence MRRFGSKFASGLASRCALACPLAS. ATP is bound by residues 207-214 and glutamine 464; that span reads DRQTGKTS.

It belongs to the ATPase alpha/beta chains family. As to quaternary structure, F-type ATPases have 2 components, F(1) - the catalytic core - and F(o) - the membrane proton channel. F(1) has five subunits: alpha(3), beta(3), gamma(1), delta(1), epsilon(1), plus the additional subunit P18 (Tb427.05.1710) that is not present in F(1)F(o) ATP synthase from metazoa. Subunit P18 (Tb927.5.1710) interacts with the alpha subunit with a 1:1 stoichiometry; the interaction is direct. Subunit gamma is part of the central stalk. F(o) has three main subunits: a, b and c. The trypanosomal ATPase complex contains additional subunits that are not present in the F(1)F(o) ATP synthase from metazoa.

The protein resides in the mitochondrion. It localises to the mitochondrion inner membrane. Mitochondrial membrane ATP synthase (F(1)F(o) ATP synthase) produces ATP from ADP in the presence of a proton gradient across the membrane which is generated by electron transport complexes of the respiratory chain. F-type ATPases consist of two structural domains, F(1) - containing the extramembraneous catalytic core, and F(o) - containing the membrane proton channel, linked together by a central stalk and a peripheral stalk. During catalysis, ATP synthesis in the catalytic domain of F(1) is coupled via a rotary mechanism of the central stalk subunits to proton translocation. Subunits alpha and beta form the catalytic core in F(1). Rotation of the central stalk against the surrounding alpha(3)beta(3) subunits leads to hydrolysis of ATP in three separate catalytic sites on the beta subunits. Subunit alpha does not bear the catalytic high-affinity ATP-binding sites. Contrary to the procyclic, insect form that requires F(1)F(o) ATP synthase for ATP synthesis, the bloodstream form relies on ATP hydrolysis by F(1)F(o) ATP synthase to maintain its mitochondrial membrane potential. The polypeptide is ATP synthase subunit alpha, mitochondrial (Trypanosoma brucei brucei).